Reading from the N-terminus, the 264-residue chain is MNQATERAVQFDVVTLFPEMFRALTDWGITSRAVKQERFGLRTWNPRDFTTDNYRTIDDRPYGGGPGMVMLAKPLEAAIGAAKAAQAEQGIASTRVVMMSPQGAPFTHERAVRMAQEPGVVVLCGRYEAIDQRLLDRCVDEEISLGDFVLSGGELPAMAMMDAVVRLLPGVLNDAQSAVQDSFVDGLLDCPHYTRPEEYEGMRVPDVLLGGHHAEIEKWRRQEALRNTLRKRPDLIVRARREKLLSRADEAWLANLAREAKNAS.

S-adenosyl-L-methionine is bound by residues Gly125 and 145 to 150 (LGDFVL).

The protein belongs to the RNA methyltransferase TrmD family. Homodimer.

It is found in the cytoplasm. It catalyses the reaction guanosine(37) in tRNA + S-adenosyl-L-methionine = N(1)-methylguanosine(37) in tRNA + S-adenosyl-L-homocysteine + H(+). Specifically methylates guanosine-37 in various tRNAs. The sequence is that of tRNA (guanine-N(1)-)-methyltransferase from Burkholderia vietnamiensis (strain G4 / LMG 22486) (Burkholderia cepacia (strain R1808)).